We begin with the raw amino-acid sequence, 162 residues long: ATP synthase subunit b 1 (162 aa).

A helical transmembrane segment spans residues 1-21 (MLLTAEFWVAVAFVAFLVIVW).

It belongs to the ATPase B chain family. F-type ATPases have 2 components, F(1) - the catalytic core - and F(0) - the membrane proton channel. F(1) has five subunits: alpha(3), beta(3), gamma(1), delta(1), epsilon(1). F(0) has three main subunits: a(1), b(2) and c(10-14). The alpha and beta chains form an alternating ring which encloses part of the gamma chain. F(1) is attached to F(0) by a central stalk formed by the gamma and epsilon chains, while a peripheral stalk is formed by the delta and b chains.

The protein localises to the cell inner membrane. In terms of biological role, f(1)F(0) ATP synthase produces ATP from ADP in the presence of a proton or sodium gradient. F-type ATPases consist of two structural domains, F(1) containing the extramembraneous catalytic core and F(0) containing the membrane proton channel, linked together by a central stalk and a peripheral stalk. During catalysis, ATP synthesis in the catalytic domain of F(1) is coupled via a rotary mechanism of the central stalk subunits to proton translocation. Its function is as follows. Component of the F(0) channel, it forms part of the peripheral stalk, linking F(1) to F(0). The polypeptide is ATP synthase subunit b 1 (Methylorubrum populi (strain ATCC BAA-705 / NCIMB 13946 / BJ001) (Methylobacterium populi)).